A 325-amino-acid polypeptide reads, in one-letter code: Bifunctional ligase/repressor BirA (325 aa).

Residues 23–42 constitute a DNA-binding region (H-T-H motif); the sequence is GQKISDALGCSRTAVWKHIE. Residues 74-262 form the BPL/LPL catalytic domain; the sequence is RFGLKTEVMG…CFEKRYRDYM (189 aa). Residues Q118, 122-124, and K189 each bind biotin; that span reads RGR.

It belongs to the biotin--protein ligase family.

It catalyses the reaction biotin + L-lysyl-[protein] + ATP = N(6)-biotinyl-L-lysyl-[protein] + AMP + diphosphate + H(+). Its function is as follows. Acts both as a biotin--[acetyl-CoA-carboxylase] ligase and a repressor. The sequence is that of Bifunctional ligase/repressor BirA from Bacillus spizizenii (strain ATCC 23059 / NRRL B-14472 / W23) (Bacillus subtilis subsp. spizizenii).